Reading from the N-terminus, the 207-residue chain is Venom allergen 5 (207 aa).

Cystine bridges form between cysteine 4–cysteine 16, cysteine 8–cysteine 105, cysteine 29–cysteine 97, and cysteine 173–cysteine 190. The region spanning 48 to 192 is the SCP domain; that stretch reads VDEHNRFRQK…MKSHYLVCNY (145 aa).

It belongs to the CRISP family. Venom allergen 5-like subfamily. In terms of assembly, monomer. Expressed by the venom gland.

The protein localises to the secreted. The chain is Venom allergen 5 from Polybia scutellaris rioplatensis (Camoati).